A 435-amino-acid polypeptide reads, in one-letter code: Xylose isomerase (435 aa).

2 residues coordinate Mg(2+): Asp-306 and Asp-308.

Belongs to the xylose isomerase family. In terms of assembly, homotetramer. It depends on Mg(2+) as a cofactor.

Its subcellular location is the cytoplasm. The enzyme catalyses alpha-D-xylose = alpha-D-xylulofuranose. In Brucella melitensis biotype 2 (strain ATCC 23457), this protein is Xylose isomerase.